A 326-amino-acid polypeptide reads, in one-letter code: Protein-arginine N-acetylglucosaminyltransferase NleB2 (326 aa).

UDP-N-acetyl-alpha-D-glucosamine is bound by residues 45-47 (QWF), Tyr69, and 216-219 (YLDM). A DXD motif motif is present at residues 218-220 (DMD). Asp220 provides a ligand contact to Mn(2+). Glu250 (proton acceptor) is an active-site residue. Residues Asn317 and Ser319 each coordinate Mn(2+). Residues Ser319 and 324–326 (SSW) contribute to the UDP-N-acetyl-alpha-D-glucosamine site.

It belongs to the glycosyltransferase NleB family. It depends on Mn(2+) as a cofactor.

The protein localises to the secreted. It localises to the host cell. The catalysed reaction is L-arginyl-[protein] + UDP-N-acetyl-alpha-D-glucosamine = N(omega)-(N-acetyl-beta-D-glucosaminyl)-L-arginyl-[protein] + UDP + H(+). Its function is as follows. Protein-arginine N-acetylglucosaminyltransferase effector that catalyzes the transfer of a single N-acetylglucosamine (GlcNAc) to a conserved arginine residue of host target proteins. In contrast to NleB1, not able to disrupt TNF signaling in infected cells. Shows a lower enzymatic activity than NleB1. This is Protein-arginine N-acetylglucosaminyltransferase NleB2 from Escherichia coli O127:H6 (strain E2348/69 / EPEC).